Reading from the N-terminus, the 392-residue chain is Phosphoglycerate kinase (392 aa).

Substrate contacts are provided by residues 21 to 23 (DFN), arginine 36, 59 to 62 (HLGR), arginine 118, and arginine 151. ATP is bound by residues lysine 202, glutamate 321, and 347–350 (GGDS).

This sequence belongs to the phosphoglycerate kinase family. In terms of assembly, monomer.

Its subcellular location is the cytoplasm. It catalyses the reaction (2R)-3-phosphoglycerate + ATP = (2R)-3-phospho-glyceroyl phosphate + ADP. It participates in carbohydrate degradation; glycolysis; pyruvate from D-glyceraldehyde 3-phosphate: step 2/5. This Symbiobacterium thermophilum (strain DSM 24528 / JCM 14929 / IAM 14863 / T) protein is Phosphoglycerate kinase.